We begin with the raw amino-acid sequence, 487 residues long: Glutamate--tRNA ligase (487 aa).

The 'HIGH' region motif lies at 11–21; it reads PSPTGYPHLGN. Zn(2+)-binding residues include C108, C110, C135, and D137. The 'KMSKS' region signature appears at 245–249; that stretch reads KLSKR. ATP is bound at residue K248.

It belongs to the class-I aminoacyl-tRNA synthetase family. Glutamate--tRNA ligase type 1 subfamily. Monomer. It depends on Zn(2+) as a cofactor.

The protein localises to the cytoplasm. The catalysed reaction is tRNA(Glu) + L-glutamate + ATP = L-glutamyl-tRNA(Glu) + AMP + diphosphate. Its function is as follows. Catalyzes the attachment of glutamate to tRNA(Glu) in a two-step reaction: glutamate is first activated by ATP to form Glu-AMP and then transferred to the acceptor end of tRNA(Glu). This Dehalococcoides mccartyi (strain ATCC BAA-2100 / JCM 16839 / KCTC 5957 / BAV1) protein is Glutamate--tRNA ligase.